Consider the following 167-residue polypeptide: Probable glutathione peroxidase 8 (167 aa).

The active site involves Cys41.

It belongs to the glutathione peroxidase family.

It carries out the reaction 2 glutathione + H2O2 = glutathione disulfide + 2 H2O. In terms of biological role, may constitute a glutathione peroxidase-like protective system against oxidative stresses. The protein is Probable glutathione peroxidase 8 (GPX8) of Arabidopsis thaliana (Mouse-ear cress).